The sequence spans 466 residues: Asparagine--tRNA ligase (466 aa).

This sequence belongs to the class-II aminoacyl-tRNA synthetase family. In terms of assembly, homodimer.

The protein localises to the cytoplasm. The enzyme catalyses tRNA(Asn) + L-asparagine + ATP = L-asparaginyl-tRNA(Asn) + AMP + diphosphate + H(+). The protein is Asparagine--tRNA ligase of Shewanella loihica (strain ATCC BAA-1088 / PV-4).